The sequence spans 537 residues: Efflux pump ustT (537 aa).

A compositionally biased stretch (basic and acidic residues) spans 1 to 25; it reads MAKEAQSLHELDNMKEKEVDQEKKA. The tract at residues 1-50 is disordered; sequence MAKEAQSLHELDNMKEKEVDQEKKAPTSVGDQEEHDDPKKQASHSQNVSE. N-linked (GlcNAc...) asparagine glycosylation is present at Asn47. The next 8 membrane-spanning stretches (helical) occupy residues 71–91, 104–124, 137–157, 162–182, 193–213, 236–256, 266–286, and 304–324; these read PLAMAVIMVAISMGMFLVSLL, WVYMSLVFIFVIGSAVGAGAM, GIGLGGVLSGSTILIAENAPL, MFLGILMATMSISAIVGPLIG, WCFILNIPIGGAIIAVLFFFV, LGSALLLPAVVCLILALQWAG, IILLFVFGGLLSIGFVVSQML, and FGSFLFSAMTGGAMLVVTYWI. Asn333 is a glycosylation site (N-linked (GlcNAc...) asparagine). A run of 4 helical transmembrane segments spans residues 339–359, 363–383, 397–417, and 430–450; these read AGIRTIALVLSQAVGAIMGGG, LIGYPPPIMMISATFIAVGAG, WIGYQILMGLGLGFGTQQASL, and TAISLIFFGMQLGGSIFVCIG. Residue Asn501 is glycosylated (N-linked (GlcNAc...) asparagine). A helical membrane pass occupies residues 507-527; that stretch reads TFYVALAAGITSMLSAFLVQW.

Belongs to the major facilitator superfamily. TCR/Tet family.

It is found in the cell membrane. Its function is as follows. Efflux pump; part of the gene cluster that mediates the biosynthesis of ustilaginoidins, dimeric gamma-naphthopyrones isolated from different fungal species. The sequence is that of Efflux pump ustT from Ustilaginoidea virens (Rice false smut fungus).